The sequence spans 711 residues: Interferon-induced GTP-binding protein Mx2 (711 aa).

Positions 115 to 387 (DLALPAIAVI…LILHINKSLP (273 aa)) constitute a Dynamin-type G domain. The tract at residues 125-132 (GDQSSGKS) is G1 motif. 125 to 132 (GDQSSGKS) is a GTP binding site. A G2 motif region spans residues 150-152 (VTR). Residues 225–228 (DLPG) form a G3 motif region. Residues 225 to 229 (DLPGI) and 294 to 297 (TKPD) each bind GTP. Residues 294-297 (TKPD) form a G4 motif region. The segment at 326–329 (RCRG) is G5 motif. A GED domain is found at 623–711 (NDEIGVHLNA…ARRALYMFFS (89 aa)).

It belongs to the TRAFAC class dynamin-like GTPase superfamily. Dynamin/Fzo/YdjA family.

It is found in the cytoplasm. The protein localises to the nucleus. Interferon-induced dynamin-like GTPase with antiviral activity against vesicular stomatitis virus (VSV). The polypeptide is Interferon-induced GTP-binding protein Mx2 (MX2) (Canis lupus familiaris (Dog)).